The sequence spans 213 residues: Golgi apparatus membrane protein TVP23 homolog A (213 aa).

The next 4 membrane-spanning stretches (helical) occupy residues 32 to 52 (PLATFFHLFFRVSAIVTYVSC), 54 to 74 (WFSKSFVGCFVMVLLLLSLDF), 123 to 143 (IFWLGLIICPMIWIVFFFSTL), and 150 to 170 (WLALVVAGISLQAANLYGYIL).

The protein belongs to the TVP23 family.

Its subcellular location is the membrane. In Homo sapiens (Human), this protein is Golgi apparatus membrane protein TVP23 homolog A (TVP23A).